We begin with the raw amino-acid sequence, 538 residues long: MALPYHIFLFTVLLPSFTLTAPPPCRCMTSSSPYQEFLWRTQRPGNIDAPLYRSFSKGSPTFTAHTYMPRTCYNSATLCMHANTQYWTGKMINPSCPGGLGVTVCWTYFTHTGMSDGGGVQDQAREKHVKEVISQLTQVHSTSSPYKGLDLSKLHETLRTHTRLVSLFNTTLTGLHEVSAQNPTNCWMCLPLDFRPYVSIPVPEQWNNFSTEINTTSVLVGPLVSNLEITHTSNLTCVKFSNTTDTTNSQCIRWVTPPTRIFCLPSGIFFVCGTSAYRCLNGSSESMCFLSFLVPPMTIYTEQDLYNYVVSKPRNKRVPILPFVMGAGVLGALGTGIGSITTSTQFYYKLSRELNGDMERVADSLVTLQDQLNSLAAVVLQNRRALDLLTAERGGTCLFLGEECCYYVNQSGIVTEKVKEIRDRIQRRAEELRNIGPWGLLSQWMPWILPFLGPLAAIILLLLFGPCIFNLLVNFVSSRIEAIKLQMEPKMESKTKNYRRSLDWPASPRSDVNDIKGIPPEEISTAQPLLRPNSAGSS.

The first 20 residues, 1–20 (MALPYHIFLFTVLLPSFTLT), serve as a signal peptide directing secretion. At 31 to 443 (SSPYQEFLWR…NIGPWGLLSQ (413 aa)) the chain is on the extracellular side. N169 carries an N-linked (GlcNAc...) asparagine glycan. Residues 186–189 (CWMC) carry the CXXC motif. 3 disulfide bridges follow: C186–C189, C186–C405, and C397–C404. N208, N214, N234, N242, and N281 each carry an N-linked (GlcNAc...) asparagine glycan. The segment at 320–340 (ILPFVMGAGVLGALGTGIGSI) is fusion peptide. An immunosuppression region spans residues 380–396 (LQNRRALDLLTAERGGT). The CX6CC motif lies at 397–405 (CLFLGEECC). N-linked (GlcNAc...) asparagine glycosylation is present at N409. The chain crosses the membrane as a helical span at residues 444-464 (WMPWILPFLGPLAAIILLLLF). The segment at 465–484 (GPCIFNLLVNFVSSRIEAIK) is essential for the fusiogenic function. The Cytoplasmic segment spans residues 465-538 (GPCIFNLLVN…LLRPNSAGSS (74 aa)). The segment at 494–538 (KTKNYRRSLDWPASPRSDVNDIKGIPPEEISTAQPLLRPNSAGSS) is disordered.

It belongs to the gamma type-C retroviral envelope protein family. HERV class-I W env subfamily. The mature envelope protein (Env) consists of a trimer of SU-TM heterodimers attached probably by a labile interchain disulfide bond. Interacts with the C-type lectin CD209/DC-SIGN. Post-translationally, specific enzymatic cleavages in vivo yield mature proteins. Envelope glycoproteins are synthesized as an inactive precursor that is heavily N-glycosylated and processed likely by furin in the Golgi to yield the mature SU and TM proteins. The cleavage site between SU and TM requires the minimal sequence [KR]-X-[KR]-R. In terms of processing, the CXXC motif is highly conserved across a broad range of retroviral envelope proteins. It is thought to participate in the formation of a labile disulfide bond possibly with the CX6CC motif present in the transmembrane protein.

Its subcellular location is the cell membrane. The protein localises to the virion. Its function is as follows. This endogenous retroviral envelope protein has retained its original fusogenic properties and participates in trophoblast fusion and the formation of a syncytium during placenta morphogenesis. May recognize and induce fusion through binding of SLC1A4 and SLC1A5. Endogenous envelope proteins may have kept, lost or modified their original function during evolution. Retroviral envelope proteins mediate receptor recognition and membrane fusion during early infection. The surface protein (SU) mediates receptor recognition, while the transmembrane protein (TM) acts as a class I viral fusion protein. The protein may have at least 3 conformational states: pre-fusion native state, pre-hairpin intermediate state, and post-fusion hairpin state. During viral and target cell membrane fusion, the coiled coil regions (heptad repeats) assume a trimer-of-hairpins structure, positioning the fusion peptide in close proximity to the C-terminal region of the ectodomain. The formation of this structure appears to drive apposition and subsequent fusion of membranes. The sequence is that of Syncytin-1 (ERVW-1) from Hylobates pileatus (Pileated gibbon).